A 293-amino-acid chain; its full sequence is Diaminopimelate epimerase (293 aa).

Residues Asn-17, Gln-47, and Asn-67 each coordinate substrate. The Proton donor role is filled by Cys-76. Residues 77-78 (GN), Asn-164, Asn-197, and 215-216 (ER) each bind substrate. Catalysis depends on Cys-224, which acts as the Proton acceptor. 225–226 (GS) is a binding site for substrate.

Belongs to the diaminopimelate epimerase family. As to quaternary structure, homodimer.

It is found in the cytoplasm. It catalyses the reaction (2S,6S)-2,6-diaminopimelate = meso-2,6-diaminopimelate. It participates in amino-acid biosynthesis; L-lysine biosynthesis via DAP pathway; DL-2,6-diaminopimelate from LL-2,6-diaminopimelate: step 1/1. Its function is as follows. Catalyzes the stereoinversion of LL-2,6-diaminopimelate (L,L-DAP) to meso-diaminopimelate (meso-DAP), a precursor of L-lysine and an essential component of the bacterial peptidoglycan. The chain is Diaminopimelate epimerase from Rhodopseudomonas palustris (strain BisB5).